The chain runs to 427 residues: Dihydroorotase (427 aa).

The Zn(2+) site is built by His60 and His62. Residues 62 to 64 (HLR) and Asn94 contribute to the substrate site. Residues Asp151, His178, and His231 each contribute to the Zn(2+) site. Residue Asn277 coordinates substrate. Zn(2+) is bound at residue Asp304. Asp304 is a catalytic residue. Residues His308 and 322-323 (FG) contribute to the substrate site.

The protein belongs to the metallo-dependent hydrolases superfamily. DHOase family. Class I DHOase subfamily. Zn(2+) is required as a cofactor.

It catalyses the reaction (S)-dihydroorotate + H2O = N-carbamoyl-L-aspartate + H(+). Its pathway is pyrimidine metabolism; UMP biosynthesis via de novo pathway; (S)-dihydroorotate from bicarbonate: step 3/3. In terms of biological role, catalyzes the reversible cyclization of carbamoyl aspartate to dihydroorotate. In Pelotomaculum thermopropionicum (strain DSM 13744 / JCM 10971 / SI), this protein is Dihydroorotase.